A 347-amino-acid chain; its full sequence is S-adenosylmethionine:tRNA ribosyltransferase-isomerase (347 aa).

It belongs to the QueA family. In terms of assembly, monomer.

The protein resides in the cytoplasm. It catalyses the reaction 7-aminomethyl-7-carbaguanosine(34) in tRNA + S-adenosyl-L-methionine = epoxyqueuosine(34) in tRNA + adenine + L-methionine + 2 H(+). It participates in tRNA modification; tRNA-queuosine biosynthesis. Its function is as follows. Transfers and isomerizes the ribose moiety from AdoMet to the 7-aminomethyl group of 7-deazaguanine (preQ1-tRNA) to give epoxyqueuosine (oQ-tRNA). This Bordetella bronchiseptica (strain ATCC BAA-588 / NCTC 13252 / RB50) (Alcaligenes bronchisepticus) protein is S-adenosylmethionine:tRNA ribosyltransferase-isomerase.